The sequence spans 541 residues: Atlastin-3 (541 aa).

Residues 1 to 22 (MLSPQRTAAVASRGAGDAMENG) form a disordered region. Residues 1–25 (MLSPQRTAAVASRGAGDAMENGKPG) are N-terminal hypervariable region (HVR). The Cytoplasmic portion of the chain corresponds to 1 to 445 (MLSPQRTAAV…NVFSTFRTPA (445 aa)). Positions 57 to 305 (DLDVVVVSVA…LIPYVLNPSK (249 aa)) constitute a GB1/RHD3-type G domain. The GDP site is built by R70, K71, G72, K73, S74, F75, and R109. Position 142 (D142) interacts with Mg(2+). R213, D214, V272, and S275 together coordinate GDP. The tract at residues 343–434 (MLQATAEANN…YENFCKHNGS (92 aa)) is 3HB (three-helix bundle) domain. At K391 the chain carries N6-acetyllysine. A helical membrane pass occupies residues 446–466 (VLFTGIAALYIASGFTGFIGL). A topological domain (lumenal) is located at residue E467. A helical membrane pass occupies residues 468-488 (VVAQLFNCMVGLLLIALLTWG). Residues 489–541 (YIRYSGQYRELGGAIDSGAAYVLEQASSHIGNSTQAAVRDAVVGRPPADKKSQ) lie on the Cytoplasmic side of the membrane.

It belongs to the TRAFAC class dynamin-like GTPase superfamily. GB1/RHD3 GTPase family. GB1 subfamily. In terms of assembly, monomeric and homodimeric. The homodimer, transiently formed by two molecules on opposing membranes, is the active form mediating ER membrane fusion. Interacts with ZFYVE27; both proteins are involved in endoplasmic reticulum tubular network organization. Interacts with REEP5; both proteins are involved in endoplasmic reticulum tubular network organization. As to expression, expressed in cardiomyocytes (at protein level).

It is found in the endoplasmic reticulum membrane. It catalyses the reaction GTP + H2O = GDP + phosphate + H(+). Functionally, atlastin-3 (ATL3) is a membrane-anchored GTPase that mediates the GTP-dependent fusion of endoplasmic reticulum (ER) membranes, maintaining the continuous ER network. It facilitates the formation of three-way junctions where ER tubules intersect. Two atlastin-3 on neighboring ER tubules bind GTP and form loose homodimers through the GB1/RHD3-type G domains and 3HB regions. Upon GTP hydrolysis, the 3HB regions tighten, pulling the membranes together to drive their fusion. After fusion, the homodimer disassembles upon release of inorganic phosphate (Pi). Subsequently, GDP dissociates, resetting the monomers to a conformation ready for a new fusion cycle. The chain is Atlastin-3 from Mus musculus (Mouse).